A 460-amino-acid chain; its full sequence is Proline--tRNA ligase (460 aa).

This sequence belongs to the class-II aminoacyl-tRNA synthetase family. ProS type 3 subfamily. In terms of assembly, homodimer.

The protein localises to the cytoplasm. It carries out the reaction tRNA(Pro) + L-proline + ATP = L-prolyl-tRNA(Pro) + AMP + diphosphate. In terms of biological role, catalyzes the attachment of proline to tRNA(Pro) in a two-step reaction: proline is first activated by ATP to form Pro-AMP and then transferred to the acceptor end of tRNA(Pro). The chain is Proline--tRNA ligase from Methanococcus maripaludis (strain DSM 14266 / JCM 13030 / NBRC 101832 / S2 / LL).